We begin with the raw amino-acid sequence, 97 residues long: Bacterial microcompartment shell protein EutM (97 aa).

Residues 3-87 form the BMC domain; the sequence is ALGMIETRGL…PHGDLEEVFP (85 aa).

It belongs to the bacterial microcompartments protein family. As to quaternary structure, homohexamer with a central pore of up to 8.6 Angstroms diameter. The hexamers pack into a two-dimensional array. Interacts with EutQ.

The protein localises to the bacterial microcompartment. It functions in the pathway amine and polyamine degradation; ethanolamine degradation. In terms of biological role, probably a major component of the bacterial microcompartment (BMC) shell dedicated to ethanolamine degradation. Each homohexamer has a central pore with an opening of up to 8.6 Angstroms. A positively-charged funnel leads to the pore from each side of the hexamer. The pore probably allows metabolite passage into and out of the BMC. In Escherichia coli O6:H1 (strain CFT073 / ATCC 700928 / UPEC), this protein is Bacterial microcompartment shell protein EutM (eutM).